A 138-amino-acid polypeptide reads, in one-letter code: Nucleoside diphosphate kinase (138 aa).

ATP is bound by residues K9, F57, R85, T91, R102, and N112. Residue H115 is the Pros-phosphohistidine intermediate of the active site.

It belongs to the NDK family. As to quaternary structure, homotetramer. Mg(2+) serves as cofactor.

The protein resides in the cytoplasm. It catalyses the reaction a 2'-deoxyribonucleoside 5'-diphosphate + ATP = a 2'-deoxyribonucleoside 5'-triphosphate + ADP. It carries out the reaction a ribonucleoside 5'-diphosphate + ATP = a ribonucleoside 5'-triphosphate + ADP. In terms of biological role, major role in the synthesis of nucleoside triphosphates other than ATP. The ATP gamma phosphate is transferred to the NDP beta phosphate via a ping-pong mechanism, using a phosphorylated active-site intermediate. The chain is Nucleoside diphosphate kinase from Deinococcus radiodurans (strain ATCC 13939 / DSM 20539 / JCM 16871 / CCUG 27074 / LMG 4051 / NBRC 15346 / NCIMB 9279 / VKM B-1422 / R1).